The following is a 496-amino-acid chain: Cytochrome P450 71B1 (496 aa).

Cys-436 contributes to the heme binding site.

The protein belongs to the cytochrome P450 family. Requires heme as cofactor.

This Thlaspi arvense (Field penny-cress) protein is Cytochrome P450 71B1 (CYP71B1).